The following is a 152-amino-acid chain: MTTETTTTKIIEANEIMKLLPHRYPFLLVDRVVDYEEGKWLKAVKNISVNEPCFTGHFPEQPIFPGVLILEAMAQATGVLACKTYRQLENEIYYFAAIDNARFKRPVLPGDQMVLEVHFLKERRGITRFTGVATVDGQVVCEAELMCARRPA.

H57 is an active-site residue.

Belongs to the thioester dehydratase family. FabZ subfamily.

It localises to the cytoplasm. The enzyme catalyses a (3R)-hydroxyacyl-[ACP] = a (2E)-enoyl-[ACP] + H2O. In terms of biological role, involved in unsaturated fatty acids biosynthesis. Catalyzes the dehydration of short chain beta-hydroxyacyl-ACPs and long chain saturated and unsaturated beta-hydroxyacyl-ACPs. The polypeptide is 3-hydroxyacyl-[acyl-carrier-protein] dehydratase FabZ (Pasteurella multocida (strain Pm70)).